Reading from the N-terminus, the 361-residue chain is S-adenosylmethionine:tRNA ribosyltransferase-isomerase (361 aa).

This sequence belongs to the QueA family. Monomer.

It localises to the cytoplasm. The catalysed reaction is 7-aminomethyl-7-carbaguanosine(34) in tRNA + S-adenosyl-L-methionine = epoxyqueuosine(34) in tRNA + adenine + L-methionine + 2 H(+). The protein operates within tRNA modification; tRNA-queuosine biosynthesis. Functionally, transfers and isomerizes the ribose moiety from AdoMet to the 7-aminomethyl group of 7-deazaguanine (preQ1-tRNA) to give epoxyqueuosine (oQ-tRNA). The sequence is that of S-adenosylmethionine:tRNA ribosyltransferase-isomerase from Glaesserella parasuis serovar 5 (strain SH0165) (Haemophilus parasuis).